A 1082-amino-acid polypeptide reads, in one-letter code: Error-prone DNA polymerase (1082 aa).

It belongs to the DNA polymerase type-C family. DnaE2 subfamily.

It is found in the cytoplasm. It catalyses the reaction DNA(n) + a 2'-deoxyribonucleoside 5'-triphosphate = DNA(n+1) + diphosphate. Its function is as follows. DNA polymerase involved in damage-induced mutagenesis and translesion synthesis (TLS). It is not the major replicative DNA polymerase. The sequence is that of Error-prone DNA polymerase from Xanthomonas campestris pv. campestris (strain B100).